The sequence spans 740 residues: Putative Pol polyprotein from transposon element Bs1 (740 aa).

One copy of the PPR repeat lies at 469–503 (TAVAHNLLVQALFMDGRASDAYVVLEEMQNNGPFP).

Functionally, bs1 is probably an active plant retrotransposon. This is Putative Pol polyprotein from transposon element Bs1 from Zea mays (Maize).